The chain runs to 115 residues: Holo-[acyl-carrier-protein] synthase (115 aa).

Mg(2+) is bound by residues D8 and E50.

It belongs to the P-Pant transferase superfamily. AcpS family. The cofactor is Mg(2+).

The protein resides in the cytoplasm. The enzyme catalyses apo-[ACP] + CoA = holo-[ACP] + adenosine 3',5'-bisphosphate + H(+). In terms of biological role, transfers the 4'-phosphopantetheine moiety from coenzyme A to a Ser of acyl-carrier-protein. The polypeptide is Holo-[acyl-carrier-protein] synthase (Pseudarthrobacter chlorophenolicus (strain ATCC 700700 / DSM 12829 / CIP 107037 / JCM 12360 / KCTC 9906 / NCIMB 13794 / A6) (Arthrobacter chlorophenolicus)).